The primary structure comprises 437 residues: Adenylosuccinate synthetase (437 aa).

Residues Gly12–Lys18 and Gly40–Thr42 each bind GTP. Asp13 acts as the Proton acceptor in catalysis. Asp13 and Gly40 together coordinate Mg(2+). IMP-binding positions include Asp13–Lys16, Asn38–His41, Thr128, Arg142, Gln223, Thr238, and Arg302. The active-site Proton donor is His41. Thr298–Arg304 is a binding site for substrate. GTP-binding positions include Arg304, Lys330–Asp332, and Ser412–Gly414.

The protein belongs to the adenylosuccinate synthetase family. In terms of assembly, homodimer. It depends on Mg(2+) as a cofactor.

It localises to the cytoplasm. It carries out the reaction IMP + L-aspartate + GTP = N(6)-(1,2-dicarboxyethyl)-AMP + GDP + phosphate + 2 H(+). It participates in purine metabolism; AMP biosynthesis via de novo pathway; AMP from IMP: step 1/2. Plays an important role in the de novo pathway of purine nucleotide biosynthesis. Catalyzes the first committed step in the biosynthesis of AMP from IMP. The protein is Adenylosuccinate synthetase of Prochlorococcus marinus (strain NATL1A).